Consider the following 475-residue polypeptide: UDP-N-acetylmuramate--L-alanine ligase (475 aa).

An ATP-binding site is contributed by 112-118 (GTHGKTT).

This sequence belongs to the MurCDEF family.

Its subcellular location is the cytoplasm. The enzyme catalyses UDP-N-acetyl-alpha-D-muramate + L-alanine + ATP = UDP-N-acetyl-alpha-D-muramoyl-L-alanine + ADP + phosphate + H(+). The protein operates within cell wall biogenesis; peptidoglycan biosynthesis. Its function is as follows. Cell wall formation. In Cupriavidus pinatubonensis (strain JMP 134 / LMG 1197) (Cupriavidus necator (strain JMP 134)), this protein is UDP-N-acetylmuramate--L-alanine ligase.